The sequence spans 592 residues: Protein kinase C zeta type (592 aa).

In terms of domain architecture, PB1 spans 15-98 (RVRLKAHYGG…EGLIIHVFPS (84 aa)). The segment at 79 to 145 (AFRLARQCRD…KRFNRRAYCG (67 aa)) is interaction with SQSTM1. The Phorbol-ester/DAG-type zinc-finger motif lies at 130 to 180 (GHLFQAKRFNRRAYCGQCSERIWGLARQGYRCINCKLLVHKRCHGLVPLTC). Positions 252 to 518 (FDLIRVIGRG…FSDIKSHAFF (267 aa)) constitute a Protein kinase domain. Residues 258–266 (IGRGSYAKV) and K281 contribute to the ATP site. The active-site Proton acceptor is D376. Phosphothreonine; by PDPK1 and PI3K is present on T410. The 72-residue stretch at 519–590 (RSIDWDLLEK…INPLLLSTEE (72 aa)) folds into the AGC-kinase C-terminal domain. T560 is modified (phosphothreonine). S591 carries the phosphoserine modification.

This sequence belongs to the protein kinase superfamily. AGC Ser/Thr protein kinase family. PKC subfamily. As to quaternary structure, forms a ternary complex with SQSTM1 and KCNAB2. Forms another ternary complex with SQSTM1 and GABRR3. Forms a complex with SQSTM1 and MAP2K5. Interacts with PARD6A, PARD6B, PARD6G and SQSTM1. Part of a complex with PARD3, PARD6A or PARD6B or PARD6G and CDC42 or RAC1. Interacts with ADAP1/CENTA1. Forms a ternary complex composed of SQSTM1 and PAWR. Interacts directly with SQSTM1. Interacts with IKBKB. Interacts (via the protein kinase domain) with WWC1. Forms a tripartite complex with WWC1 and DDR1, but predominantly in the absence of collagen. Component of the Par polarity complex, composed of at least phosphorylated PRKCZ, PARD3 and TIAM1. Interacts with PDPK1 (via N-terminal region). Interacts with WDFY2 (via WD repeats 1-3). Interacts with VAMP2. Forms a complex with WDFY2 and VAMP2. Interacts with APPL1. Interacts with WWC1, WWC2 and WWC3. Post-translationally, CDH5 is required for its phosphorylation at Thr-410. Phosphorylated by protein kinase PDPK1; phosphorylation is inhibited by the apoptotic C-terminal cleavage product of PKN2. Phosphorylation at Thr-410 by PI3K activates the kinase. Expressed in brain, and to a lesser extent in lung, kidney and testis.

It localises to the cytoplasm. The protein localises to the endosome. The protein resides in the cell junction. Its subcellular location is the membrane. It carries out the reaction L-seryl-[protein] + ATP = O-phospho-L-seryl-[protein] + ADP + H(+). It catalyses the reaction L-threonyl-[protein] + ATP = O-phospho-L-threonyl-[protein] + ADP + H(+). Its activity is regulated as follows. Atypical PKCs (PRKCI and PRKCZ) exhibit an elevated basal enzymatic activity (that may be due to the interaction with SMG1 or SQSTM1) and are not regulated by diacylglycerol, phosphatidylserine, phorbol esters or calcium ions. Two specific sites, Thr-410 (activation loop of the kinase domain) and Thr-560 (turn motif), need to be phosphorylated for its full activation. Phosphatidylinositol 3,4,5-trisphosphate might be a physiological activator. Isoform 2: Constitutively active. In terms of biological role, calcium- and diacylglycerol-independent serine/threonine-protein kinase that functions in phosphatidylinositol 3-kinase (PI3K) pathway and mitogen-activated protein (MAP) kinase cascade, and is involved in NF-kappa-B activation, mitogenic signaling, cell proliferation, cell polarity, inflammatory response and maintenance of long-term potentiation (LTP). Upon lipopolysaccharide (LPS) treatment in macrophages, or following mitogenic stimuli, functions downstream of PI3K to activate MAP2K1/MEK1-MAPK1/ERK2 signaling cascade independently of RAF1 activation. Required for insulin-dependent activation of AKT3, but may function as an adapter rather than a direct activator. Upon insulin treatment may act as a downstream effector of PI3K and contribute to the activation of translocation of the glucose transporter SLC2A4/GLUT4 and subsequent glucose transport in adipocytes. In EGF-induced cells, binds and activates MAP2K5/MEK5-MAPK7/ERK5 independently of its kinase activity and can activate JUN promoter through MEF2C. Through binding with SQSTM1/p62, functions in interleukin-1 signaling and activation of NF-kappa-B with the specific adapters RIPK1 and TRAF6. Participates in TNF-dependent transactivation of NF-kappa-B by phosphorylating and activating IKBKB kinase, which in turn leads to the degradation of NF-kappa-B inhibitors. In migrating astrocytes, forms a cytoplasmic complex with PARD6A and is recruited by CDC42 to function in the establishment of cell polarity along with the microtubule motor and dynein. In association with FEZ1, stimulates neuronal differentiation in PC12 cells. In the inflammatory response, is required for the T-helper 2 (Th2) differentiation process, including interleukin production, efficient activation of JAK1 and the subsequent phosphorylation and nuclear translocation of STAT6. May be involved in development of allergic airway inflammation (asthma), a process dependent on Th2 immune response. In the NF-kappa-B-mediated inflammatory response, can relieve SETD6-dependent repression of NF-kappa-B target genes by phosphorylating the RELA subunit at 'Ser-311'. Phosphorylates VAMP2 in vitro. Phosphorylates and activates LRRK1, which phosphorylates RAB proteins involved in intracellular trafficking. Functionally, involved in late synaptic long term potention phase in CA1 hippocampal cells and long term memory maintenance. This Homo sapiens (Human) protein is Protein kinase C zeta type (PRKCZ).